We begin with the raw amino-acid sequence, 301 residues long: MGSNAVPSLWYWVVGEDQESGRATWWAHTELNWGTDKQKQFVENQLGFKDDSNSDSKNSNLKAQGLTQPAYLIAGLDVVADHLVFAAFKAGAVGYDMSTENSAATKDQALAWSTTAGLDSAGGYKALVENTAGLNGPINGLFTLLDSFAYVTPVSGMKGGSQNNEEVQTKYPVKDDSKASAKIASLINASPLNSYGDDGVTVFDALGLNFNFKLNEARLPSRTDQLLVYGIVNESELKSARENAQSTSDANSNTKVKWTNTASHYLPVPYYYSANFPEVGNRRRAEQRNGVITIKRPSTQR.

It belongs to the MgpC family.

The chain is Putative MgpC-like protein MPN_093 from Mycoplasma pneumoniae (strain ATCC 29342 / M129 / Subtype 1) (Mycoplasmoides pneumoniae).